Here is a 288-residue protein sequence, read N- to C-terminus: Polyamine aminopropyltransferase (288 aa).

The region spanning 9–238 (ETLHDQFGQY…GIMTFAWATD (230 aa)) is the PABS domain. Glutamine 33 serves as a coordination point for S-methyl-5'-thioadenosine. Spermidine is bound by residues histidine 64 and aspartate 88. Residues glutamate 108 and 140 to 141 (DG) contribute to the S-methyl-5'-thioadenosine site. Aspartate 158 serves as the catalytic Proton acceptor. 158-161 (DCTD) is a spermidine binding site. S-methyl-5'-thioadenosine is bound at residue proline 165.

Belongs to the spermidine/spermine synthase family. Homodimer or homotetramer.

It is found in the cytoplasm. It carries out the reaction S-adenosyl 3-(methylsulfanyl)propylamine + putrescine = S-methyl-5'-thioadenosine + spermidine + H(+). The protein operates within amine and polyamine biosynthesis; spermidine biosynthesis; spermidine from putrescine: step 1/1. Its function is as follows. Catalyzes the irreversible transfer of a propylamine group from the amino donor S-adenosylmethioninamine (decarboxy-AdoMet) to putrescine (1,4-diaminobutane) to yield spermidine. This chain is Polyamine aminopropyltransferase, found in Shigella dysenteriae serotype 1 (strain Sd197).